We begin with the raw amino-acid sequence, 217 residues long: 3,4-dihydroxy-2-butanone 4-phosphate synthase (217 aa).

Residues 37–38 (RE), D42, 150–154 (RGGHT), and E174 contribute to the D-ribulose 5-phosphate site. Position 38 (E38) interacts with Mg(2+). H153 is a Mg(2+) binding site.

Belongs to the DHBP synthase family. In terms of assembly, homodimer. It depends on Mg(2+) as a cofactor. The cofactor is Mn(2+).

It carries out the reaction D-ribulose 5-phosphate = (2S)-2-hydroxy-3-oxobutyl phosphate + formate + H(+). Its pathway is cofactor biosynthesis; riboflavin biosynthesis; 2-hydroxy-3-oxobutyl phosphate from D-ribulose 5-phosphate: step 1/1. Functionally, catalyzes the conversion of D-ribulose 5-phosphate to formate and 3,4-dihydroxy-2-butanone 4-phosphate. The chain is 3,4-dihydroxy-2-butanone 4-phosphate synthase from Pectobacterium carotovorum subsp. carotovorum (strain PC1).